The sequence spans 388 residues: Succinate--CoA ligase [ADP-forming] subunit beta (388 aa).

Positions 9–244 (KEILRKYNVP…LDEEDPAEIE (236 aa)) constitute an ATP-grasp domain. Residues Lys46, 53-55 (GRG), Glu99, Ala102, and Glu107 each bind ATP. 2 residues coordinate Mg(2+): Asn199 and Asp213. Substrate contacts are provided by residues Asn264 and 321–323 (GIM).

Belongs to the succinate/malate CoA ligase beta subunit family. As to quaternary structure, heterotetramer of two alpha and two beta subunits. Requires Mg(2+) as cofactor.

The enzyme catalyses succinate + ATP + CoA = succinyl-CoA + ADP + phosphate. It carries out the reaction GTP + succinate + CoA = succinyl-CoA + GDP + phosphate. The protein operates within carbohydrate metabolism; tricarboxylic acid cycle; succinate from succinyl-CoA (ligase route): step 1/1. Its function is as follows. Succinyl-CoA synthetase functions in the citric acid cycle (TCA), coupling the hydrolysis of succinyl-CoA to the synthesis of either ATP or GTP and thus represents the only step of substrate-level phosphorylation in the TCA. The beta subunit provides nucleotide specificity of the enzyme and binds the substrate succinate, while the binding sites for coenzyme A and phosphate are found in the alpha subunit. The chain is Succinate--CoA ligase [ADP-forming] subunit beta from Ralstonia pickettii (strain 12J).